A 246-amino-acid chain; its full sequence is UDP-N-acetyl-D-mannosaminuronic acid transferase (246 aa).

The protein belongs to the glycosyltransferase 26 family.

It carries out the reaction UDP-N-acetyl-alpha-D-mannosaminouronate + N-acetyl-alpha-D-glucosaminyl-di-trans,octa-cis-undecaprenyl diphosphate = beta-D-ManNAcA-(1-&gt;4)-alpha-D-GlcNAc-di-trans,octa-cis-undecaprenyl diphosphate + UDP + H(+). Its pathway is bacterial outer membrane biogenesis; enterobacterial common antigen biosynthesis. Functionally, catalyzes the synthesis of Und-PP-GlcNAc-ManNAcA (Lipid II), the second lipid-linked intermediate involved in enterobacterial common antigen (ECA) synthesis. In Escherichia coli O6:K15:H31 (strain 536 / UPEC), this protein is UDP-N-acetyl-D-mannosaminuronic acid transferase.